Here is a 686-residue protein sequence, read N- to C-terminus: NADH-ubiquinone oxidoreductase chain 5 (686 aa).

A run of 17 helical transmembrane segments spans residues 3-23 (LIIL…GRFV), 40-60 (ALLS…LFSF), 101-121 (ITLP…LFSV), 139-159 (LFTF…LFVG), 160-180 (WEGI…RIQA), 198-218 (LSIA…STVF), 222-242 (AYIN…GAMA), 261-281 (TPVS…YLLI), 293-313 (VLLV…TCGL), 321-341 (IIAF…GLSQ), 350-370 (LFHA…IHAF), 382-402 (LINF…SLLA), 432-452 (ILGS…ISLV), 472-492 (ITVI…GYVT), 526-546 (LIFK…ALYL), 635-655 (ALYI…PMLV), and 665-685 (LIIL…KKLS).

The protein belongs to the complex I subunit 5 family.

Its subcellular location is the mitochondrion inner membrane. The enzyme catalyses a ubiquinone + NADH + 5 H(+)(in) = a ubiquinol + NAD(+) + 4 H(+)(out). Functionally, core subunit of the mitochondrial membrane respiratory chain NADH dehydrogenase (Complex I) that is believed to belong to the minimal assembly required for catalysis. Complex I functions in the transfer of electrons from NADH to the respiratory chain. The immediate electron acceptor for the enzyme is believed to be ubiquinone. This chain is NADH-ubiquinone oxidoreductase chain 5 (ND5), found in Schizophyllum commune (Split gill fungus).